The following is a 163-amino-acid chain: MAKDNSFDIVSQIDLQEVDNAINQSSKEISQRFDLKGTNTTVERNDTEISINAPDDMKLKNVVDILQTKLTQRGISLKALEYGKIEHALGGRAKQVIKLQQGIDKDQAKKITTLIKDSKIKVQASIQGESVRVSGKNRDDLQAAIQLLKEADLPMNLQFTNYR.

It belongs to the YajQ family.

Nucleotide-binding protein. In Alkaliphilus oremlandii (strain OhILAs) (Clostridium oremlandii (strain OhILAs)), this protein is Nucleotide-binding protein Clos_1967.